The following is a 433-amino-acid chain: Cysteine--tRNA ligase (433 aa).

Position 4 (Cys-4) interacts with Zn(2+). A 'HIGH' region motif is present at residues 6 to 16 (PTVYDTAHIGN). Residues Cys-188, His-213, and Glu-217 each contribute to the Zn(2+) site. Residues 246–250 (KMSKS) carry the 'KMSKS' region motif. Lys-249 lines the ATP pocket.

This sequence belongs to the class-I aminoacyl-tRNA synthetase family. As to quaternary structure, monomer. Requires Zn(2+) as cofactor.

It is found in the cytoplasm. The catalysed reaction is tRNA(Cys) + L-cysteine + ATP = L-cysteinyl-tRNA(Cys) + AMP + diphosphate. The sequence is that of Cysteine--tRNA ligase from Wolbachia sp. subsp. Brugia malayi (strain TRS).